The sequence spans 500 residues: MPPAGGIFHRPPTTRKSRRLTPRSACSNSTCSRTWGEQPWLLALHSIDSDRNAGRRPCKRRAIAMIRTIKSARGSVVNGGNGAMTSAVQTLLDQVEQGGDRAVRELSIRFDKFDRDSYRLTKAEIDACINSLTGREREDLDFAQDQIRNFAEAQRATLLDLEIETLPGVVLGHRNVPIQNVGCYVPGGKYPLLASAHMTVLTARVAGCERIITCAPPFQGKVAEKIVAAQALAGADEIYCLGGVQAIAAMAYGTETIAPVDMVAGPGNAYVAEAKRLLFGKVGIDLFAGPTETLVIADDSVDGELVATDLLGQAEHGVNSPAVLITNSEKLALDTVAEIGRLLTILPTAAIAAKAWEDFGEIILCETTKEMVAEADRLASEHVQVMTRDPDHFLNSMRNYGALFLGARTNVSFGDKVIGTNHTLPTNKAARYTGGLWVGKFLKTCTYQRILTDEASALIGEYGSRLSLMEGFVGHAEQSNIRVRRYGGRNVGYAMPVDPR.

The interval 1-25 (MPPAGGIFHRPPTTRKSRRLTPRSA) is disordered. Basic residues predominate over residues 12–21 (PTTRKSRRLT). Positions 313 and 316 each coordinate Zn(2+). Residues Glu-381 and His-382 each act as proton acceptor in the active site. Zn(2+)-binding residues include Asp-415 and His-475.

The protein belongs to the histidinol dehydrogenase family. Zn(2+) is required as a cofactor.

The chain is Histidinol dehydrogenase homolog 1 from Mesorhizobium japonicum (strain LMG 29417 / CECT 9101 / MAFF 303099) (Mesorhizobium loti (strain MAFF 303099)).